A 422-amino-acid polypeptide reads, in one-letter code: Keratan-sulfate endo-1,4-beta-galactosidase (422 aa).

The N-terminal stretch at 1–46 is a signal peptide; the sequence is MRKTKFWLVLSLIATSLSIFACKKDSTATKNPIPEVSKAKASTKLL. Positions 47 to 292 constitute a GH16 domain; sequence NATTVATTDY…YVRVYKLPLF (246 aa). Residue E171 is the Nucleophile of the active site. The active-site Proton donor is E176. Residues 291 to 406 form the CBM-cenC domain; it reads LFSNGDFESG…NTTATVYFYK (116 aa).

It belongs to the glycosyl hydrolase 16 family.

It is found in the secreted. The catalysed reaction is Endohydrolysis of (1-&gt;4)-beta-D-galactosidic linkages in keratan sulfate.. Hydrolyzes internal endo-beta-galactosyl linkages in keratan sulfate and in various neolacto-type glycosphingolipids, producing sulfated and non-sulfated disaccharides, and glucosylceramides respectivly. In Sphingobacterium multivorum, this protein is Keratan-sulfate endo-1,4-beta-galactosidase.